The sequence spans 341 residues: GTP-binding protein REM 2 (341 aa).

The segment covering 1–13 (MHTDLDTDMDADT) has biased composition (acidic residues). Disordered stretches follow at residues 1-72 (MHTD…SMPV) and 84-106 (VDEL…GSGE). Residues 18 to 32 (LCSSSSRQASPSGTP) show a composition bias toward polar residues. Phosphoserine is present on Ser-27. Residues 43 to 54 (QKPEKLLAELDR) are compositionally biased toward basic and acidic residues. The span at 94 to 105 (SSSGSSDSLGSG) shows a compositional bias: low complexity. Residues 122-129 (GESGVGKS), 230-233 (NKSD), and 261-262 (AA) each bind GTP. The disordered stretch occupies residues 282–309 (RGRGHAGGQRPEPSSPDGPAPPTRRESL). Residues 294-303 (PSSPDGPAPP) show a composition bias toward pro residues. Ser-296 is modified (phosphoserine).

This sequence belongs to the small GTPase superfamily. RGK family. In terms of tissue distribution, expressed in brain and kidney.

It is found in the cell membrane. In terms of biological role, binds GTP saturably and exhibits a low intrinsic rate of GTP hydrolysis. This is GTP-binding protein REM 2 (Rem2) from Rattus norvegicus (Rat).